Here is a 247-residue protein sequence, read N- to C-terminus: Cell division protein ZapD (247 aa).

The protein belongs to the ZapD family. Interacts with FtsZ.

It localises to the cytoplasm. Cell division factor that enhances FtsZ-ring assembly. Directly interacts with FtsZ and promotes bundling of FtsZ protofilaments, with a reduction in FtsZ GTPase activity. In Klebsiella pneumoniae subsp. pneumoniae (strain ATCC 700721 / MGH 78578), this protein is Cell division protein ZapD.